The primary structure comprises 244 residues: tRNA pseudouridine synthase A (244 aa).

D52 functions as the Nucleophile in the catalytic mechanism. Y110 contacts substrate.

This sequence belongs to the tRNA pseudouridine synthase TruA family. In terms of assembly, homodimer.

It catalyses the reaction uridine(38/39/40) in tRNA = pseudouridine(38/39/40) in tRNA. In terms of biological role, formation of pseudouridine at positions 38, 39 and 40 in the anticodon stem and loop of transfer RNAs. This is tRNA pseudouridine synthase A from Clostridium botulinum (strain Eklund 17B / Type B).